A 27-amino-acid polypeptide reads, in one-letter code: Cupiennin-3c (27 aa).

As to expression, expressed by the venom gland.

It is found in the secreted. The polypeptide is Cupiennin-3c (Cupiennius salei (American wandering spider)).